Here is a 236-residue protein sequence, read N- to C-terminus: Phosphoribosylaminoimidazole-succinocarboxamide synthase (236 aa).

It belongs to the SAICAR synthetase family.

It catalyses the reaction 5-amino-1-(5-phospho-D-ribosyl)imidazole-4-carboxylate + L-aspartate + ATP = (2S)-2-[5-amino-1-(5-phospho-beta-D-ribosyl)imidazole-4-carboxamido]succinate + ADP + phosphate + 2 H(+). It functions in the pathway purine metabolism; IMP biosynthesis via de novo pathway; 5-amino-1-(5-phospho-D-ribosyl)imidazole-4-carboxamide from 5-amino-1-(5-phospho-D-ribosyl)imidazole-4-carboxylate: step 1/2. In Lactococcus lactis subsp. lactis (strain IL1403) (Streptococcus lactis), this protein is Phosphoribosylaminoimidazole-succinocarboxamide synthase (purC).